We begin with the raw amino-acid sequence, 506 residues long: MEEIQRYLQLERSQQHDFLYPLIFQEYIYAFAHDRDFGRSILSENLGYDSKSSLLVVKRLISRMYQQNRFILSLDDSNQNPFWTCNNNFYSQTVSEGFAFIVEIPFSLRFKSCLEEKKIVNSQNLRSIHSIFPFLEDNFAHLNYILDILIPHPVHVEILVQNLRHWLKDASSLHLLRFLLNEYWNWNSLITPKKASSSFSKKNQRLFLLLYNSHVCEYEYFFVFIRNQSSHLRSTSSGVFLERIYFYEKIERLVNIFIKVKDLQANLWLVKEPCMHYVRYQRKSILASKGTSVLMNKWKCYLVTFWQWHFSLWFHPRRIYINQLSNHSLEFLGYLSSVRMNPSVVRSQILENSFLINNAIKKLETLVPIFLLIASLAKAKFCNVLGHPISKPVWADLSDSNIIDRFGRISKNLSHYYSGSSKKKSLYRVKYILRLSCARTLARKHKSTVRAFLKRLGSELLEEFLMTEEDILSLTFPKPSSALRGVYRSRIWYLDIIWINDLANYK.

The protein belongs to the intron maturase 2 family. MatK subfamily.

It localises to the plastid. Its subcellular location is the chloroplast. Functionally, usually encoded in the trnK tRNA gene intron. Probably assists in splicing its own and other chloroplast group II introns. This is Maturase K from Artanema fimbriatum.